Reading from the N-terminus, the 87-residue chain is uncharacterized protein (87 aa).

Positions 4–87 (SIIEITNIKK…KPKGNITIKI (84 aa)) constitute a 2Fe-2S ferredoxin-type domain. Positions 38, 43, 46, and 75 each coordinate [2Fe-2S] cluster.

[2Fe-2S] cluster is required as a cofactor.

This is an uncharacterized protein from Buchnera aphidicola subsp. Acyrthosiphon pisum (strain APS) (Acyrthosiphon pisum symbiotic bacterium).